The primary structure comprises 81 residues: Small serum protein 4 (81 aa).

Positions 1–19 are cleaved as a signal peptide; it reads MKVFFILIIFSFTLATCQG. 3 disulfide bridges follow: cysteine 21-cysteine 74, cysteine 41-cysteine 66, and cysteine 64-cysteine 73.

Belongs to the beta-microseminoprotein family.

The protein localises to the secreted. In terms of biological role, shows an slight inhibitory effect toward the metalloproteinase brevilysin H6, but does not inhibit the metalloproteinases thermolysin, HR1A and HR1B. This is Small serum protein 4 from Protobothrops flavoviridis (Habu).